Consider the following 628-residue polypeptide: Netrin-4 (628 aa).

The first 19 residues, 1–19, serve as a signal peptide directing secretion; the sequence is MGSCARLLLLWGCSAVAAG. One can recognise a Laminin N-terminal domain in the interval 30 to 261; that stretch reads CEKACNPRMG…AVYDFIVKGS (232 aa). N56 and N163 each carry an N-linked (GlcNAc...) asparagine glycan. 12 cysteine pairs are disulfide-bonded: C262-C271, C264-C293, C295-C304, C307-C329, C332-C341, C334-C359, C362-C371, C374-C392, C395-C413, C397-C420, C422-C431, and C434-C446. 3 Laminin EGF-like domains span residues 262 to 331, 332 to 394, and 395 to 448; these read CFCN…ECRT, CKCN…ACKA, and CSCH…GCRP. N-linked (GlcNAc...) asparagine glycosylation is present at N353. An N-linked (GlcNAc...) asparagine glycan is attached at N483. 2 cysteine pairs are disulfide-bonded: C506/C576 and C520/C627. The 122-residue stretch at 506–627 folds into the NTR domain; it reads CECKEQVLGN…RVMHILKRDC (122 aa).

As to quaternary structure, may form a homodimer. Expressed in kidney, liver, heart, ovary, testis, retina, brain, olfactory bulb, and widely expressed in embryo.

The protein localises to the secreted. The protein resides in the extracellular space. It localises to the extracellular matrix. Its subcellular location is the basement membrane. Functionally, may play an important role in neural, kidney and vascular development. Promotes neurite elongation from olfactory bulb explants. In Mus musculus (Mouse), this protein is Netrin-4 (Ntn4).